The primary structure comprises 269 residues: Putative pyruvate, phosphate dikinase regulatory protein (269 aa).

147 to 154 (GVSRSSKT) lines the ADP pocket.

It belongs to the pyruvate, phosphate/water dikinase regulatory protein family. PDRP subfamily.

The enzyme catalyses N(tele)-phospho-L-histidyl/L-threonyl-[pyruvate, phosphate dikinase] + ADP = N(tele)-phospho-L-histidyl/O-phospho-L-threonyl-[pyruvate, phosphate dikinase] + AMP + H(+). It carries out the reaction N(tele)-phospho-L-histidyl/O-phospho-L-threonyl-[pyruvate, phosphate dikinase] + phosphate + H(+) = N(tele)-phospho-L-histidyl/L-threonyl-[pyruvate, phosphate dikinase] + diphosphate. Bifunctional serine/threonine kinase and phosphorylase involved in the regulation of the pyruvate, phosphate dikinase (PPDK) by catalyzing its phosphorylation/dephosphorylation. In Trichlorobacter lovleyi (strain ATCC BAA-1151 / DSM 17278 / SZ) (Geobacter lovleyi), this protein is Putative pyruvate, phosphate dikinase regulatory protein.